Consider the following 220-residue polypeptide: Vesicle-associated membrane protein 7 (220 aa).

Ala2 carries the post-translational modification N-acetylalanine. Topologically, residues 2-188 are cytoplasmic; the sequence is AILFAVVARG…ARAMCMKNLK (187 aa). Positions 7–110 constitute a Longin domain; sequence VVARGTTILA…AMNSEFSSVL (104 aa). Residues 125–185 form the v-SNARE coiled-coil homology domain; sequence KVMETQAQVD…RNLARAMCMK (61 aa). Phosphoserine is present on residues Ser167 and Ser168. A helical; Anchor for type IV membrane protein membrane pass occupies residues 189 to 209; it reads LTIIIIIVSIVFIYIIVSPLC. Topologically, residues 210 to 220 are vesicular; the sequence is GGFTWPSCVKK.

The protein belongs to the synaptobrevin family. Component of the SNARE complex composed of STX4, SNAP23 and VAMP7 that binds SYT7 during lysosomal exocytosis. Component of the SNARE complex composed of STX7, STX8, VAMP7 and VTI1B that is required for heterotypic fusion of late endosomes with lysosomes in liver cells. May interact with STX17. Interacts with PICALM. Interacts with RAB21.

It is found in the cytoplasmic vesicle. The protein resides in the secretory vesicle membrane. Its subcellular location is the golgi apparatus. It localises to the trans-Golgi network membrane. The protein localises to the late endosome membrane. It is found in the lysosome membrane. The protein resides in the endoplasmic reticulum membrane. Its subcellular location is the phagosome membrane. It localises to the synapse. The protein localises to the synaptosome. Its function is as follows. Involved in the targeting and/or fusion of transport vesicles to their target membrane during transport of proteins from the early endosome to the lysosome. Required for heterotypic fusion of late endosomes with lysosomes and homotypic lysosomal fusion. Required for calcium regulated lysosomal exocytosis. Involved in the export of chylomicrons from the endoplasmic reticulum to the cis Golgi. Required for exocytosis of mediators during eosinophil and neutrophil degranulation, and target cell killing by natural killer cells. Required for focal exocytosis of late endocytic vesicles during phagosome formation. This Pongo abelii (Sumatran orangutan) protein is Vesicle-associated membrane protein 7 (VAMP7).